A 178-amino-acid chain; its full sequence is Ribosome maturation factor RimM (178 aa).

A PRC barrel domain is found at 100 to 178; it reads TDGEYYWYQL…EMKVEWDADF (79 aa).

It belongs to the RimM family. In terms of assembly, binds ribosomal protein uS19.

The protein localises to the cytoplasm. An accessory protein needed during the final step in the assembly of 30S ribosomal subunit, possibly for assembly of the head region. Essential for efficient processing of 16S rRNA. May be needed both before and after RbfA during the maturation of 16S rRNA. It has affinity for free ribosomal 30S subunits but not for 70S ribosomes. This chain is Ribosome maturation factor RimM, found in Pseudomonas fluorescens (strain SBW25).